A 234-amino-acid polypeptide reads, in one-letter code: Uridylate kinase (234 aa).

9-12 provides a ligand contact to ATP; it reads KLSG. G51 contributes to the UMP binding site. Residues G52 and R56 each coordinate ATP. Residues D71 and 132–139 contribute to the UMP site; that span reads CGNPFFTT. Positions 159, 165, and 168 each coordinate ATP.

The protein belongs to the UMP kinase family. As to quaternary structure, homohexamer.

Its subcellular location is the cytoplasm. It carries out the reaction UMP + ATP = UDP + ADP. It participates in pyrimidine metabolism; CTP biosynthesis via de novo pathway; UDP from UMP (UMPK route): step 1/1. Its activity is regulated as follows. Inhibited by UTP. Catalyzes the reversible phosphorylation of UMP to UDP. The protein is Uridylate kinase of Prochlorococcus marinus (strain MIT 9215).